We begin with the raw amino-acid sequence, 154 residues long: Minor structural pilin EpdC (154 aa).

Residues 1-13 (MIKMLQLPFNKKG) constitute a propeptide that is removed on maturation. The QXSXEXXXL signature appears at 14-24 (QVSFDFIIAML).

Post-translationally, the N-terminus is cleaved by the prepilin peptidase EppA, which recognizes the class III signal sequence.

The protein resides in the secreted. Its subcellular location is the cell surface. It localises to the fimbrium. Functionally, minor component of the type IV-like pili. Essential for pili formation. This Methanococcus maripaludis (strain DSM 14266 / JCM 13030 / NBRC 101832 / S2 / LL) protein is Minor structural pilin EpdC.